The following is a 759-amino-acid chain: uncharacterized protein (759 aa).

Composition is skewed to low complexity over residues 1-36, 142-211, and 221-347; these read MSSN…NETN, QQQN…NQHH, and NHSN…GSSS. Disordered regions lie at residues 1–47, 142–380, 409–428, 463–504, and 654–759; these read MSSN…AQTP, QQQN…PSIG, NNNC…GLGY, IING…NFEN, and LVDD…YLNK. The span at 348–360 shows a compositional bias: polar residues; sequence PFQDQARSPSSSF. Composition is skewed to low complexity over residues 463–495 and 660–747; these read IING…GNNN and HISN…DNNN.

This is an uncharacterized protein from Dictyostelium discoideum (Social amoeba).